A 649-amino-acid chain; its full sequence is Macrolide export ATP-binding/permease protein MacB (649 aa).

An ABC transporter domain is found at Ile7–Leu245. Gly43–Ser50 serves as a coordination point for ATP. Helical transmembrane passes span Leu276 to Gly296, Ile529 to Val549, Leu582 to Phe602, and Phe612 to Phe632.

The protein belongs to the ABC transporter superfamily. Macrolide exporter (TC 3.A.1.122) family. In terms of assembly, homodimer. Part of the tripartite efflux system MacAB-TolC, which is composed of an inner membrane transporter, MacB, a periplasmic membrane fusion protein, MacA, and an outer membrane component, TolC. The complex forms a large protein conduit and can translocate molecules across both the inner and outer membranes. Interacts with MacA.

Its subcellular location is the cell inner membrane. Part of the tripartite efflux system MacAB-TolC. MacB is a non-canonical ABC transporter that contains transmembrane domains (TMD), which form a pore in the inner membrane, and an ATP-binding domain (NBD), which is responsible for energy generation. Confers resistance against macrolides. The protein is Macrolide export ATP-binding/permease protein MacB of Pasteurella multocida (strain Pm70).